We begin with the raw amino-acid sequence, 94 residues long: Large ribosomal subunit protein bL25 (94 aa).

It belongs to the bacterial ribosomal protein bL25 family. Part of the 50S ribosomal subunit; part of the 5S rRNA/L5/L18/L25 subcomplex. Contacts the 5S rRNA. Binds to the 5S rRNA independently of L5 and L18.

In terms of biological role, this is one of the proteins that binds to the 5S RNA in the ribosome where it forms part of the central protuberance. The protein is Large ribosomal subunit protein bL25 of Edwardsiella ictaluri (strain 93-146).